An 819-amino-acid polypeptide reads, in one-letter code: Sulfate permease 2 (819 aa).

Asn-24 carries N-linked (GlcNAc...) asparagine glycosylation. The next 10 membrane-spanning stretches (helical) occupy residues 72–92 (YNLT…FVVV), 104–124 (LAPE…WAFA), 129–149 (ITIG…ANVQ), 172–192 (LLFL…IVAI), 194–214 (AFMT…LMGI), 273–293 (FFVS…VSWL), 328–348 (ILSA…IEHI), 365–385 (SQEL…GGYP), 454–474 (FWLT…VSIF), and 477–497 (IENG…WRIA). An STAS domain is found at 551-708 (ELQISTPWPG…ENHKGGVQEV (158 aa)). Asn-581 is a glycosylation site (N-linked (GlcNAc...) asparagine). The disordered stretch occupies residues 726-766 (EAVPVGTSGSGSTDEKRPEGEGGATNGGMEKGSANGEDIST). A compositionally biased stretch (gly residues) spans 746-755 (EGGATNGGME).

This sequence belongs to the SLC26A/SulP transporter (TC 2.A.53) family. Mainly found in mycelia.

It localises to the membrane. Functionally, uptake of sulfate into the cell. The polypeptide is Sulfate permease 2 (cys-14) (Neurospora crassa (strain ATCC 24698 / 74-OR23-1A / CBS 708.71 / DSM 1257 / FGSC 987)).